A 264-amino-acid polypeptide reads, in one-letter code: S-adenosylmethionine decarboxylase proenzyme (264 aa).

Residue Ser-111 is the Schiff-base intermediate with substrate; via pyruvic acid of the active site. Ser-111 bears the Pyruvic acid (Ser); by autocatalysis mark. Catalysis depends on His-116, which acts as the Proton acceptor; for processing activity. Cys-139 functions as the Proton donor; for catalytic activity in the catalytic mechanism.

It belongs to the prokaryotic AdoMetDC family. Type 2 subfamily. In terms of assembly, heterooctamer of four alpha and four beta chains arranged as a tetramer of alpha/beta heterodimers. It depends on pyruvate as a cofactor. Post-translationally, is synthesized initially as an inactive proenzyme. Formation of the active enzyme involves a self-maturation process in which the active site pyruvoyl group is generated from an internal serine residue via an autocatalytic post-translational modification. Two non-identical subunits are generated from the proenzyme in this reaction, and the pyruvate is formed at the N-terminus of the alpha chain, which is derived from the carboxyl end of the proenzyme. The post-translation cleavage follows an unusual pathway, termed non-hydrolytic serinolysis, in which the side chain hydroxyl group of the serine supplies its oxygen atom to form the C-terminus of the beta chain, while the remainder of the serine residue undergoes an oxidative deamination to produce ammonia and the pyruvoyl group blocking the N-terminus of the alpha chain.

It catalyses the reaction S-adenosyl-L-methionine + H(+) = S-adenosyl 3-(methylsulfanyl)propylamine + CO2. The protein operates within amine and polyamine biosynthesis; S-adenosylmethioninamine biosynthesis; S-adenosylmethioninamine from S-adenosyl-L-methionine: step 1/1. Catalyzes the decarboxylation of S-adenosylmethionine to S-adenosylmethioninamine (dcAdoMet), the propylamine donor required for the synthesis of the polyamines spermine and spermidine from the diamine putrescine. The protein is S-adenosylmethionine decarboxylase proenzyme of Geobacillus kaustophilus (strain HTA426).